Consider the following 373-residue polypeptide: Lipoyl amidotransferase LIPT1, mitochondrial (373 aa).

The transit peptide at 1 to 25 (MLIPLSMKNCFRLLCQHKVPAAGFK) directs the protein to the mitochondrion. The region spanning 57–243 (LEGKPILFLW…EYAAHHQVDG (187 aa)) is the BPL/LPL catalytic domain. Positions 107, 151, 161, and 179 each coordinate (R)-lipoyl-5'-AMP.

Belongs to the LplA family.

The protein resides in the mitochondrion. It carries out the reaction (R)-lipoyl-5'-AMP + L-lysyl-[lipoyl-carrier protein] = N(6)-[(R)-lipoyl]-L-lysyl-[lipoyl-carrier protein] + AMP + 2 H(+). The catalysed reaction is N(6)-[(R)-lipoyl]-L-lysyl-[glycine-cleavage complex H protein] + L-lysyl-[lipoyl-carrier protein] = L-lysyl-[glycine-cleavage complex H protein] + N(6)-[(R)-lipoyl]-L-lysyl-[lipoyl-carrier protein]. It functions in the pathway protein modification; protein lipoylation via exogenous pathway; protein N(6)-(lipoyl)lysine from lipoate: step 2/2. Functionally, lipoyl amidotransferase that catalyzes the transfer of lipoyl moieties from lipoyl-protein H of the glycine cleavage system (lipoyl-GCSH) to E2 subunits of the pyruvate dehydrogenase complex (PDCE2). Unable to catalyze the transfer of octanoyl from octanoyl-GCSH to PDCE2. In vitro, it is also able to catalyze the transfer of the lipoyl group from lipoyl-AMP to the specific lysine residue of lipoyl domains of lipoate-dependent enzymes but this reaction may not be physiologically relevant. The chain is Lipoyl amidotransferase LIPT1, mitochondrial from Mus musculus (Mouse).